We begin with the raw amino-acid sequence, 830 residues long: ATP-dependent DNA helicase chl-1 (830 aa).

Residues 1-403 (MDEFSFPFQP…HNLLYMKQLE (403 aa)) enclose the Helicase ATP-binding domain. Residue 35–42 (SPTGTGKS) coordinates ATP. 2 stretches are compositionally biased toward basic and acidic residues: residues 124–140 (GMVE…RDTD) and 157–168 (NDEKSEKQRDSD). The tract at residues 124–173 (GMVEVSRKRKAPARDTDQFLEPQDEAAPSEEYNNDEKSEKQRDSDFFDDV) is disordered. The [4Fe-4S] cluster site is built by cysteine 222, cysteine 240, cysteine 272, and cysteine 308. The short motif at 351–354 (DEAH) is the DEAH box element.

It belongs to the DEAD box helicase family. DEAH subfamily. DDX11/CHL1 sub-subfamily. Requires [4Fe-4S] cluster as cofactor.

It is found in the nucleus. The catalysed reaction is Couples ATP hydrolysis with the unwinding of duplex DNA at the replication fork by translocating in the 5'-3' direction. This creates two antiparallel DNA single strands (ssDNA). The leading ssDNA polymer is the template for DNA polymerase III holoenzyme which synthesizes a continuous strand.. It catalyses the reaction ATP + H2O = ADP + phosphate + H(+). In terms of biological role, required for normal cell proliferation and chromosome stability. Plays a role in DNA repair during replication. In Caenorhabditis elegans, this protein is ATP-dependent DNA helicase chl-1.